The primary structure comprises 151 residues: Regulatory protein RecX (151 aa).

This sequence belongs to the RecX family.

It is found in the cytoplasm. In terms of biological role, modulates RecA activity. In Actinobacillus pleuropneumoniae serotype 5b (strain L20), this protein is Regulatory protein RecX.